The primary structure comprises 388 residues: N-acetylneuraminate epimerase (388 aa).

An N-terminal signal peptide occupies residues 1–26 (MFSLIRAKRLAIGIAALAWSTGAVMA). Kelch repeat units follow at residues 48-92 (MAYV…AAAG), 94-147 (KIFA…VGLA), 149-186 (GRIA…KLVD), 187-232 (SYMG…ATMG), 236-285 (FLLV…VAGA), 307-356 (ANAA…DAPG), and 358-387 (LLVV…LSVE). Catalysis depends on Glu242, which acts as the Proton acceptor.

The protein belongs to the NanM family. As to quaternary structure, homodimer.

The protein localises to the periplasm. It catalyses the reaction N-acetyl-alpha-neuraminate = N-acetyl-beta-neuraminate. Converts alpha-N-acetylneuranimic acid (Neu5Ac) to the beta-anomer, accelerating the equilibrium between the alpha- and beta-anomers. Probably facilitates sialidase-negative bacteria to compete successfully for limited amounts of extracellular Neu5Ac, which is likely taken up in the beta-anomer. In addition, the rapid removal of sialic acid from solution might be advantageous to the bacterium to damp down host responses. In Brucella melitensis biotype 1 (strain ATCC 23456 / CCUG 17765 / NCTC 10094 / 16M), this protein is N-acetylneuraminate epimerase.